The following is a 415-amino-acid chain: L-cysteine:1D-myo-inositol 2-amino-2-deoxy-alpha-D-glucopyranoside ligase (415 aa).

The segment at 1 to 20 is disordered; that stretch reads MQSWSETAVPSVPGQGPPLR. Cysteine 43 serves as a coordination point for Zn(2+). Residues 43-46, threonine 58, and 81-83 contribute to the L-cysteinyl-5'-AMP site; these read CGIT and NVT. A 'HIGH' region motif is present at residues 45-55; sequence ITPYDATHLGH. The 'ERGGDP' region motif lies at 187–192; it reads ERGGDP. Tryptophan 227 lines the L-cysteinyl-5'-AMP pocket. Residue cysteine 231 participates in Zn(2+) binding. 249–251 contacts L-cysteinyl-5'-AMP; that stretch reads GSD. Histidine 256 is a Zn(2+) binding site. Position 283 (isoleucine 283) interacts with L-cysteinyl-5'-AMP. The 'KMSKS' region motif lies at 289–293; sequence KMSKS.

It belongs to the class-I aminoacyl-tRNA synthetase family. MshC subfamily. In terms of assembly, monomer. Requires Zn(2+) as cofactor.

It carries out the reaction 1D-myo-inositol 2-amino-2-deoxy-alpha-D-glucopyranoside + L-cysteine + ATP = 1D-myo-inositol 2-(L-cysteinylamino)-2-deoxy-alpha-D-glucopyranoside + AMP + diphosphate + H(+). Its function is as follows. Catalyzes the ATP-dependent condensation of GlcN-Ins and L-cysteine to form L-Cys-GlcN-Ins. The chain is L-cysteine:1D-myo-inositol 2-amino-2-deoxy-alpha-D-glucopyranoside ligase from Rhodococcus jostii (strain RHA1).